Reading from the N-terminus, the 865-residue chain is Fanconi-associated nuclease 1 homolog (865 aa).

The UBZ4-type zinc-finger motif lies at 35–62 (GKICPLCETKFSLASYKSHMNTCNVADD). Zn(2+) is bound by residues C38, C41, H53, and C57. Disordered stretches follow at residues 90–140 (DASF…SLDV) and 162–187 (RRSS…PVKK). Composition is skewed to basic and acidic residues over residues 93-112 (FSDK…REVP) and 174-187 (DQAD…PVKK). Positions 682, 810, 825, and 826 each coordinate Mn(2+). Residues 744 to 857 (QELIEENIRK…GIRAEVCHVA (114 aa)) form the VRR-NUC domain.

Belongs to the FAN1 family. Mn(2+) serves as cofactor. It depends on Mg(2+) as a cofactor.

Its subcellular location is the nucleus. It catalyses the reaction Hydrolytically removes 5'-nucleotides successively from the 3'-hydroxy termini of 3'-hydroxy-terminated oligonucleotides.. Its function is as follows. Nuclease required for the repair of DNA interstrand cross-links (ICL). Acts as a 5'-3' exonuclease that anchors at a cut end of DNA and cleaves DNA successively at every third nucleotide, allowing to excise an ICL from one strand through flanking incisions. This is Fanconi-associated nuclease 1 homolog (fan-1) from Caenorhabditis elegans.